Reading from the N-terminus, the 296-residue chain is Ribosomal RNA small subunit methyltransferase H (296 aa).

Residues 38 to 40 (GAH), Glu-57, Phe-88, Asp-103, and His-110 each bind S-adenosyl-L-methionine.

The protein belongs to the methyltransferase superfamily. RsmH family.

It localises to the cytoplasm. It catalyses the reaction cytidine(1402) in 16S rRNA + S-adenosyl-L-methionine = N(4)-methylcytidine(1402) in 16S rRNA + S-adenosyl-L-homocysteine + H(+). Specifically methylates the N4 position of cytidine in position 1402 (C1402) of 16S rRNA. The sequence is that of Ribosomal RNA small subunit methyltransferase H from Borreliella afzelii (strain PKo) (Borrelia afzelii).